The sequence spans 277 residues: Large ribosomal subunit protein uL2 (277 aa).

Residues 222–277 (GSVMNPNDHPHGGGEGKAPVGRKAPSTPWGKPALGLKTRNKKAKSDKLIVRRRNEK) form a disordered region. Positions 264 to 277 (AKSDKLIVRRRNEK) are enriched in basic and acidic residues.

Belongs to the universal ribosomal protein uL2 family. In terms of assembly, part of the 50S ribosomal subunit. Forms a bridge to the 30S subunit in the 70S ribosome.

Its function is as follows. One of the primary rRNA binding proteins. Required for association of the 30S and 50S subunits to form the 70S ribosome, for tRNA binding and peptide bond formation. It has been suggested to have peptidyltransferase activity; this is somewhat controversial. Makes several contacts with the 16S rRNA in the 70S ribosome. The chain is Large ribosomal subunit protein uL2 from Streptococcus thermophilus (strain CNRZ 1066).